Here is a 422-residue protein sequence, read N- to C-terminus: Enolase (422 aa).

Glutamine 162 serves as a coordination point for (2R)-2-phosphoglycerate. The active-site Proton donor is glutamate 204. Positions 241, 284, and 311 each coordinate Mg(2+). Lysine 336, arginine 365, serine 366, and lysine 387 together coordinate (2R)-2-phosphoglycerate. The active-site Proton acceptor is lysine 336.

It belongs to the enolase family. Component of the RNA degradosome, a multiprotein complex involved in RNA processing and mRNA degradation. Requires Mg(2+) as cofactor.

It is found in the cytoplasm. The protein localises to the secreted. The protein resides in the cell surface. It catalyses the reaction (2R)-2-phosphoglycerate = phosphoenolpyruvate + H2O. Its pathway is carbohydrate degradation; glycolysis; pyruvate from D-glyceraldehyde 3-phosphate: step 4/5. Its function is as follows. Catalyzes the reversible conversion of 2-phosphoglycerate (2-PG) into phosphoenolpyruvate (PEP). It is essential for the degradation of carbohydrates via glycolysis. This Legionella pneumophila (strain Corby) protein is Enolase.